The sequence spans 236 residues: Small ribosomal subunit protein eS6 (236 aa).

Phosphoserine is present on residues Ser-232 and Ser-233.

The protein belongs to the eukaryotic ribosomal protein eS6 family. Phosphorylated.

The protein is Small ribosomal subunit protein eS6 (RPS6) of Eremothecium gossypii (strain ATCC 10895 / CBS 109.51 / FGSC 9923 / NRRL Y-1056) (Yeast).